Consider the following 286-residue polypeptide: Polyamine aminopropyltransferase (286 aa).

The PABS domain maps to 2 to 237 (DLWFSEVHTP…GYWLFGFASK (236 aa)). Glutamine 31 contacts S-methyl-5'-thioadenosine. Position 86 (aspartate 86) interacts with spermidine. S-methyl-5'-thioadenosine contacts are provided by residues glutamate 106 and 137-138 (NG). Aspartate 155 acts as the Proton acceptor in catalysis.

This sequence belongs to the spermidine/spermine synthase family. Homodimer or homotetramer.

The protein resides in the cytoplasm. The catalysed reaction is S-adenosyl 3-(methylsulfanyl)propylamine + putrescine = S-methyl-5'-thioadenosine + spermidine + H(+). It functions in the pathway amine and polyamine biosynthesis; spermidine biosynthesis; spermidine from putrescine: step 1/1. In terms of biological role, catalyzes the irreversible transfer of a propylamine group from the amino donor S-adenosylmethioninamine (decarboxy-AdoMet) to putrescine (1,4-diaminobutane) to yield spermidine. The protein is Polyamine aminopropyltransferase of Streptococcus pneumoniae serotype 4 (strain ATCC BAA-334 / TIGR4).